The chain runs to 471 residues: MNAAGGGSGAQAAAVAAGNNSLSHNALLSTASGATTMPMAQLADGWLELESDPGLFTLLLKDFGCHDVQVEEVYDLQKPIESPYGFIFLFRWIEERRARRKIVETTAEIFVKDEEAISSIFFAQQVVPNSCATHALLSVLLNCNENNLQLGDTLSRLKTHTKGMSPENKGLAIGNTPELACAHNSHAMPQARRRLERTGAGVSSCRFTGEAFHFVSFVPINGQLFELDGLKPYPMNHGGWEDSEDWTDKFRRVMAERLGIATGEQDIRFNLMAVVPDRRIAITHKLKMLRTNQAIVSGTLQKLLKADEQGESGNGDSQRPDTPTTLLEPSAFTARDLQSLLKNLDTEIAINEQHLADENDRRHMFKVDASRRTHNYDKFICTFLSMLAHQGVLGELVSQHLLPSKKVSGQGAANRISKQSTTASAGGSTAAGTASTPKTQQQQAAAAKNGKSPSKTPGRRRKGRNKCRKRK.

Positions 45-276 (GWLELESDPG…IRFNLMAVVP (232 aa)) constitute a UCH catalytic domain. The active-site Nucleophile is C131. The active-site Proton donor is the H213. Coiled-coil stretches lie at residues 240–256 (WEDSEDWTDKFRRVMAE) and 298–324 (GTLQKLLKADEQGESGNGDSQRPDTPT). The disordered stretch occupies residues 307–326 (DEQGESGNGDSQRPDTPTTL). A compositionally biased stretch (polar residues) spans 314-326 (NGDSQRPDTPTTL). Residues 375 to 403 (NYDKFICTFLSMLAHQGVLGELVSQHLLP) enclose the ULD domain. The interval 405-471 (KKVSGQGAAN…KGRNKCRKRK (67 aa)) is positively charged C-terminal tail required for binding nucleosomes. Positions 412-471 (AANRISKQSTTASAGGSTAAGTASTPKTQQQQAAAAKNGKSPSKTPGRRRKGRNKCRKRK) are disordered. A compositionally biased stretch (low complexity) spans 420-447 (STTASAGGSTAAGTASTPKTQQQQAAAA). Residues 457-471 (PGRRRKGRNKCRKRK) show a composition bias toward basic residues.

Belongs to the peptidase C12 family. BAP1 subfamily. Catalytic component of the polycomb repressive deubiquitinase (PR-DUB) complex, at least composed of caly/calypso, Asx and sba (MBD5/6 homolog). The PR-DUB complex associates with nucleosomes to mediate deubiquitination of histone H2AK118ub1 substrates; the association requires the positively charged C-terminal tail of caly, probably due to direct binding of DNA. Interacts (via ULD domain) with Asx (via DEUBAD domain); the interaction produces a stable heterodimer with a composite binding site for ubiquitin. Homodimerizes (via coiled-coil hinge-region between the UCH and ULD domains) to mediate assembly of 2 copies of the caly-Asx heterodimer into a bisymmetric tetramer; dimerization enhances PR-DUB association with nucleosomes.

The protein resides in the nucleus. It catalyses the reaction Thiol-dependent hydrolysis of ester, thioester, amide, peptide and isopeptide bonds formed by the C-terminal Gly of ubiquitin (a 76-residue protein attached to proteins as an intracellular targeting signal).. In terms of biological role, catalytic component of the polycomb repressive deubiquitinase (PR-DUB) complex, a complex that specifically mediates deubiquitination of histone H2A monoubiquitinated at 'Lys-119' (H2AK118ub1). Mediates bisymmetric organization of the PR-DUB complex and is involved in association with nucleosomes to mediate deubiquitination. Does not deubiquitinate monoubiquitinated histone H2B. Required to maintain the transcriptionally repressive state of homeotic genes throughout development. The PR-DUB complex has weak or no activity toward 'Lys-48'- and 'Lys-63'-linked polyubiquitin chains. Polycomb group (PcG) protein. This is Ubiquitin carboxyl-terminal hydrolase calypso from Drosophila melanogaster (Fruit fly).